The primary structure comprises 292 residues: Probable septum site-determining protein MinC (292 aa).

The tract at residues 109–188 is disordered; sequence QVIDTAPPND…PQSSSALVIT (80 aa). A compositionally biased stretch (acidic residues) spans 140–150; it reads QDDEADGEQAD. Positions 171–185 are enriched in polar residues; the sequence is ANRPTATPPQSSSAL.

It belongs to the MinC family. In terms of assembly, interacts with MinD and FtsZ.

In terms of biological role, cell division inhibitor that blocks the formation of polar Z ring septums. Rapidly oscillates between the poles of the cell to destabilize FtsZ filaments that have formed before they mature into polar Z rings. Prevents FtsZ polymerization. This is Probable septum site-determining protein MinC from Bordetella pertussis (strain Tohama I / ATCC BAA-589 / NCTC 13251).